The following is a 75-amino-acid chain: UPF0346 protein LEUM_0763 (75 aa).

This sequence belongs to the UPF0346 family.

This Leuconostoc mesenteroides subsp. mesenteroides (strain ATCC 8293 / DSM 20343 / BCRC 11652 / CCM 1803 / JCM 6124 / NCDO 523 / NBRC 100496 / NCIMB 8023 / NCTC 12954 / NRRL B-1118 / 37Y) protein is UPF0346 protein LEUM_0763.